A 397-amino-acid polypeptide reads, in one-letter code: Homeobox protein knotted-1-like 2 (397 aa).

Disordered regions lie at residues 43-68, 172-191, and 233-276; these read TFHL…SPGT, FEAR…DPEL, and NNNA…PRAE. Residues 49–58 are compositionally biased toward gly residues; the sequence is SGGGGGGGSG. The ELK domain maps to 279-299; it reads ELKNHLLRKYSGYLSSLKQEL. Positions 300–363 form a DNA-binding region, homeobox; TALE-type; sequence SKKKKKGKLP…NQRKRHWKPS (64 aa).

It belongs to the TALE/KNOX homeobox family. In terms of tissue distribution, expressed only in the stems.

It is found in the nucleus. In terms of biological role, probably binds to the DNA sequence 5'-TGAC-3'. In Malus domestica (Apple), this protein is Homeobox protein knotted-1-like 2.